A 441-amino-acid chain; its full sequence is MNQAKKLYLETFGCQMNVSDSEKIVTLMKGMGYQQTQDPVDADLVLLNTCSIRATAEQRVYGHLGKFKSIKKTKPGLIIGVGGCVAQQEGEKLLKKAPFVNLVFGTHNLHLLQGMVAAAEEGKRSSQTDFLDDEKRFDLFPHSEAEGGVTRFVTVMQGCDNFCAYCIVPHVRGREISRSAAKVVEEVRALADSGVTEVTLLGQNVNSYCSKQPGEPDFPDLLRLVAQVDGIERIRFTTSHPKDMSPRLIECFADLPKLAPHIHLPAQSGSDRVLERMNRGYTAQQYLAKVAALKEACPAIQFTGDMIVGFPGEDEAAFQDTMALMEQVQYADLFSFIYSARPGTKAAEYADDATRAEKQGRLERLQAAQKKTTLARNRSLEGTVQKVLVEGLSSTGDSLFGRTGGNRGTVMAGDPSLAGRVLDVKIVEGLQTLLKGEIVHD.

The 117-residue stretch at 5–121 (KKLYLETFGC…LQGMVAAAEE (117 aa)) folds into the MTTase N-terminal domain. Positions 14, 50, 84, 159, 163, and 166 each coordinate [4Fe-4S] cluster. The region spanning 145–375 (AEGGVTRFVT…QAAQKKTTLA (231 aa)) is the Radical SAM core domain. Residues 378-440 (RSLEGTVQKV…QTLLKGEIVH (63 aa)) enclose the TRAM domain.

It belongs to the methylthiotransferase family. MiaB subfamily. As to quaternary structure, monomer. [4Fe-4S] cluster serves as cofactor.

It is found in the cytoplasm. It carries out the reaction N(6)-dimethylallyladenosine(37) in tRNA + (sulfur carrier)-SH + AH2 + 2 S-adenosyl-L-methionine = 2-methylsulfanyl-N(6)-dimethylallyladenosine(37) in tRNA + (sulfur carrier)-H + 5'-deoxyadenosine + L-methionine + A + S-adenosyl-L-homocysteine + 2 H(+). Catalyzes the methylthiolation of N6-(dimethylallyl)adenosine (i(6)A), leading to the formation of 2-methylthio-N6-(dimethylallyl)adenosine (ms(2)i(6)A) at position 37 in tRNAs that read codons beginning with uridine. The polypeptide is tRNA-2-methylthio-N(6)-dimethylallyladenosine synthase (Citrifermentans bemidjiense (strain ATCC BAA-1014 / DSM 16622 / JCM 12645 / Bem) (Geobacter bemidjiensis)).